A 541-amino-acid polypeptide reads, in one-letter code: MAEASSLERQSPRVASCLVHSLCPREPSLQTTAVVSMGSADHQFNLAELLTQNYNLQEGCAEAPQCPDKPEEELDKDFIDQSSDMPLDELLALYGYESSDPISEQESEGGDTAPALPDMTLDKEQIAKDLLSGEEEEETQSSADDLTPSVTSHEASDLFHNQSGSRFLAGDNGPGSSASSDTEEDALPANKCKKEIMVGPQFQADLNILHLNRHCDKIYENEDQLLWSPSVLPEREVEEFLYRAVKRRWQEMAGPQIPEGEVVKDSEQALYELVKCNFNVEEALRRLRFNVKVIRDGLCAWSEEECRNFEHGFRVHGKNFHLIQANKVRTRSVGECVEYYYLWKKSERYDYFAQQTRLGRRKFVSSGTTDTEQDLDGLDPDGHARLHSEAGVPVEPLNVDIEAGGLDQPGVGSDDLPSSEPGPRPFQQLDEPPAVPSLQQPTSLAASAELPPAAAAAPEPGTSPRLPVDLALPEELPLVSSPVALSEDTAEPMAPAQVALSVTEFGLIGIGDVNPFLTGHPACPTSTLHSEPLSQCNVMTC.

S11 is modified (phosphoserine). Disordered regions lie at residues 100–119 (DPIS…LPDM) and 131–186 (LSGE…EEDA). Residues 140-165 (QSSADDLTPSVTSHEASDLFHNQSGS) are compositionally biased toward polar residues. The ELM2 domain occupies 194-291 (KEIMVGPQFQ…EALRRLRFNV (98 aa)). Positions 296 to 348 (DGLCAWSEEECRNFEHGFRVHGKNFHLIQANKVRTRSVGECVEYYYLWKKSER) constitute an SANT domain. A disordered region spans residues 364–440 (VSSGTTDTEQ…EPPAVPSLQQ (77 aa)).

As to quaternary structure, part of a complex containing at least CDYL, MIER1, MIER2, HDAC1 and HDAC2.

The protein resides in the nucleus. Functionally, transcriptional repressor. The sequence is that of Mesoderm induction early response protein 2 (Mier2) from Mus musculus (Mouse).